Here is a 118-residue protein sequence, read N- to C-terminus: Aspartate 1-decarboxylase (118 aa).

Ser-25 acts as the Schiff-base intermediate with substrate; via pyruvic acid in catalysis. A Pyruvic acid (Ser) modification is found at Ser-25. Thr-57 is a substrate binding site. The Proton donor role is filled by Tyr-58. Substrate is bound at residue Gly-73–Ala-75.

Belongs to the PanD family. Heterooctamer of four alpha and four beta subunits. Pyruvate serves as cofactor. In terms of processing, is synthesized initially as an inactive proenzyme, which is activated by self-cleavage at a specific serine bond to produce a beta-subunit with a hydroxyl group at its C-terminus and an alpha-subunit with a pyruvoyl group at its N-terminus.

It localises to the cytoplasm. It catalyses the reaction L-aspartate + H(+) = beta-alanine + CO2. Its pathway is cofactor biosynthesis; (R)-pantothenate biosynthesis; beta-alanine from L-aspartate: step 1/1. Catalyzes the pyruvoyl-dependent decarboxylation of aspartate to produce beta-alanine. The polypeptide is Aspartate 1-decarboxylase (Caulobacter vibrioides (strain ATCC 19089 / CIP 103742 / CB 15) (Caulobacter crescentus)).